We begin with the raw amino-acid sequence, 116 residues long: Iron-sulfur cluster assembly protein CyaY (116 aa).

The protein belongs to the frataxin family.

In terms of biological role, involved in iron-sulfur (Fe-S) cluster assembly. May act as a regulator of Fe-S biogenesis. In Buchnera aphidicola subsp. Acyrthosiphon pisum (strain APS) (Acyrthosiphon pisum symbiotic bacterium), this protein is Iron-sulfur cluster assembly protein CyaY.